The primary structure comprises 2313 residues: Protein Ycf2 (2313 aa).

1606 to 1613 (GSMETGRS) provides a ligand contact to ATP.

It belongs to the Ycf2 family.

The protein resides in the plastid. The protein localises to the chloroplast stroma. Functionally, probable ATPase of unknown function. Its presence in a non-photosynthetic plant (Epifagus virginiana) and experiments in tobacco indicate that it has an essential function which is probably not related to photosynthesis. This Psilotum nudum (Whisk fern) protein is Protein Ycf2.